The sequence spans 288 residues: Polyamine aminopropyltransferase (288 aa).

The region spanning 9–238 (ETLHDQFGQY…GIMTFAWATD (230 aa)) is the PABS domain. Q33 serves as a coordination point for S-methyl-5'-thioadenosine. Spermidine is bound by residues H64 and D88. Residues E108 and 140–141 (DG) each bind S-methyl-5'-thioadenosine. The active-site Proton acceptor is the D158. 158-161 (DCTD) provides a ligand contact to spermidine. Residue P165 coordinates S-methyl-5'-thioadenosine.

Belongs to the spermidine/spermine synthase family. As to quaternary structure, homodimer or homotetramer.

It is found in the cytoplasm. The catalysed reaction is S-adenosyl 3-(methylsulfanyl)propylamine + putrescine = S-methyl-5'-thioadenosine + spermidine + H(+). It participates in amine and polyamine biosynthesis; spermidine biosynthesis; spermidine from putrescine: step 1/1. In terms of biological role, catalyzes the irreversible transfer of a propylamine group from the amino donor S-adenosylmethioninamine (decarboxy-AdoMet) to putrescine (1,4-diaminobutane) to yield spermidine. In Shigella boydii serotype 18 (strain CDC 3083-94 / BS512), this protein is Polyamine aminopropyltransferase.